We begin with the raw amino-acid sequence, 800 residues long: Fibroblast growth factor receptor 4 (800 aa).

The N-terminal stretch at methionine 1–alanine 16 is a signal peptide. Ig-like C2-type domains follow at residues phenylalanine 17 to aspartate 115, proline 148 to aspartate 236, and proline 245 to threonine 345. Over phenylalanine 17 to aspartate 367 the chain is Extracellular. Cysteine 54 and cysteine 98 are disulfide-bonded. Asparagine 109 carries N-linked (GlcNAc...) asparagine glycosylation. A disulfide bridge links cysteine 168 with cysteine 220. N-linked (GlcNAc...) asparagine glycosylation is found at asparagine 254, asparagine 286, and asparagine 307. Cysteine 267 and cysteine 329 are joined by a disulfide. The chain crosses the membrane as a helical span at residues isoleucine 368–tyrosine 388. At histidine 389–threonine 800 the chain is on the cytoplasmic side. In terms of domain architecture, Protein kinase spans leucine 465–leucine 753. Residues leucine 471–valine 479 and lysine 501 contribute to the ATP site. The residue at position 571 (serine 571) is a Phosphoserine. Aspartate 610 (proton acceptor) is an active-site residue. Phosphotyrosine; by autocatalysis is present on residues tyrosine 640, tyrosine 641, and tyrosine 752. The segment at aspartate 768 to threonine 800 is disordered. Low complexity predominate over residues serine 770–serine 781.

This sequence belongs to the protein kinase superfamily. Tyr protein kinase family. Fibroblast growth factor receptor subfamily. Monomer. Homodimer after ligand binding. Interacts with FGF1, FGF2, FGF4, FGF6, FGF8, FGF9, FGF16, FGF17, FGF18, FGF19, FGF21 and FGF23 (in vitro). Binding affinity for FGF family members is enhanced by interactions between FGFs and heparan sulfate proteoglycans. Interacts with KLB; this strongly increases the affinity for FGF19 and FGF23. Affinity for FGF19 is strongly increased by KLB and sulfated glycosaminoglycans. KLB and KL both interact with the core-glycosylated FGFR4 in the endoplasmic reticulum and promote its degradation, so that only FGFR4 with fully mature N-glycans is expressed at the cell surface. Identified in a complex with NCAM1, CDH2, PLCG1, FRS2, SRC, SHC1, GAP43 and CTTN. Interacts with MMP14 and HIP1. Interacts with STAT3. N-glycosylated. Full maturation of the glycan chains in the Golgi is essential for high affinity interaction with FGF19. In terms of processing, ubiquitinated. Subject to proteasomal degradation when not fully glycosylated. Post-translationally, autophosphorylated. Binding of FGF family members together with heparan sulfate proteoglycan or heparin promotes receptor dimerization and autophosphorylation on tyrosine residues. Autophosphorylation occurs in trans between the two FGFR molecules present in the dimer.

The protein localises to the cell membrane. The protein resides in the endosome. It localises to the endoplasmic reticulum. It catalyses the reaction L-tyrosyl-[protein] + ATP = O-phospho-L-tyrosyl-[protein] + ADP + H(+). Present in an inactive conformation in the absence of bound ligand. Ligand binding leads to dimerization and activation by autophosphorylation on tyrosine residues. Functionally, tyrosine-protein kinase that acts as a cell-surface receptor for fibroblast growth factors and plays a role in the regulation of cell proliferation, differentiation and migration, and in regulation of lipid metabolism, bile acid biosynthesis, glucose uptake, vitamin D metabolism and phosphate homeostasis. Required for normal down-regulation of the expression of CYP7A1, the rate-limiting enzyme in bile acid synthesis, in response to FGF19. Phosphorylates PLCG1 and FRS2. Ligand binding leads to the activation of several signaling cascades. Activation of PLCG1 leads to the production of the cellular signaling molecules diacylglycerol and inositol 1,4,5-trisphosphate. Phosphorylation of FRS2 triggers recruitment of GRB2, GAB1, PIK3R1 and SOS1, and mediates activation of RAS, MAPK1/ERK2, MAPK3/ERK1 and the MAP kinase signaling pathway, as well as of the AKT1 signaling pathway. Promotes SRC-dependent phosphorylation of the matrix protease MMP14 and its lysosomal degradation. FGFR4 signaling is down-regulated by receptor internalization and degradation; MMP14 promotes internalization and degradation of FGFR4. The polypeptide is Fibroblast growth factor receptor 4 (Fgfr4) (Rattus norvegicus (Rat)).